Consider the following 869-residue polypeptide: Ubiquitin carboxyl-terminal hydrolase 29 (869 aa).

Composition is skewed to polar residues over residues 104–120 (SSTPCESQQPMEPMSSQ) and 140–150 (SLNTTPESGTP). The tract at residues 104–226 (SSTPCESQQP…KAVTLREQEK (123 aa)) is disordered. Residues 187 to 200 (VNKDIPKENTPDQK) show a composition bias toward basic and acidic residues. Basic residues predominate over residues 201–212 (KKSRRYYSRNRG). Residues 213 to 226 (GKAEKAVTLREQEK) show a composition bias toward basic and acidic residues. Residues 289 to 826 (EGFPNLGNTC…SGYIFFYMHN (538 aa)) form the USP domain. The Nucleophile role is filled by C298. The disordered stretch occupies residues 723–754 (SQEDPEKDLSRSPELQEDDPHSFAFGSDDSKD). The Proton acceptor role is filled by H781.

The protein belongs to the peptidase C19 family. Predominantly expressed in brain and testis. Highest expression levels in adult brain, especially in the cerebral cortex and hippocampus, and in the forebrain, face, and limb buds of midgestation mouse embryos.

The protein resides in the cytoplasm. It is found in the perinuclear region. It carries out the reaction Thiol-dependent hydrolysis of ester, thioester, amide, peptide and isopeptide bonds formed by the C-terminal Gly of ubiquitin (a 76-residue protein attached to proteins as an intracellular targeting signal).. Functionally, deubiquitinase involved in innate antiviral immunity by mediating 'Lys-48'-linked deubiquitination of CGAS, thereby promoting its stabilization. This is Ubiquitin carboxyl-terminal hydrolase 29 from Mus musculus (Mouse).